A 1019-amino-acid polypeptide reads, in one-letter code: Photoactivated adenylate cyclase subunit alpha-like protein FB (1019 aa).

One can recognise a BLUF 1 domain in the interval 55-148; sequence LRRLMYLSAS…GRLYGEWHMK (94 aa). The Guanylate cyclase 1 domain maps to 204–332; the sequence is VVTFIYLVEF…DCINTASRIT (129 aa). One can recognise a BLUF 2 domain in the interval 467–559; it reads LITLTYISQA…REYGSPLDMT (93 aa). Residues 615–744 form the Guanylate cyclase 2 domain; that stretch reads VLLATDICSF…EVSARVMEVV (130 aa). The segment covering 825 to 839 has biased composition (low complexity); that stretch reads APGRGAPAGGIPSSP. The segment at 825–862 is disordered; sequence APGRGAPAGGIPSSPKVRPPGRTNSVSSYTPDPNEALD. Over residues 846-855 the composition is skewed to polar residues; the sequence is RTNSVSSYTP.

It belongs to the adenylyl cyclase class-4/guanylyl cyclase family. As to quaternary structure, heterotetramer of two alpha and two beta subunits.

Its subcellular location is the cell projection. The protein resides in the cilium. It is found in the flagellum. This Euglena gracilis protein is Photoactivated adenylate cyclase subunit alpha-like protein FB.